The following is a 308-amino-acid chain: Bifunctional protein FolD (308 aa).

Residues 171-173 (GRS), serine 198, and isoleucine 239 contribute to the NADP(+) site.

It belongs to the tetrahydrofolate dehydrogenase/cyclohydrolase family. As to quaternary structure, homodimer.

The catalysed reaction is (6R)-5,10-methylene-5,6,7,8-tetrahydrofolate + NADP(+) = (6R)-5,10-methenyltetrahydrofolate + NADPH. The enzyme catalyses (6R)-5,10-methenyltetrahydrofolate + H2O = (6R)-10-formyltetrahydrofolate + H(+). The protein operates within one-carbon metabolism; tetrahydrofolate interconversion. In terms of biological role, catalyzes the oxidation of 5,10-methylenetetrahydrofolate to 5,10-methenyltetrahydrofolate and then the hydrolysis of 5,10-methenyltetrahydrofolate to 10-formyltetrahydrofolate. In Borreliella burgdorferi (strain ATCC 35210 / DSM 4680 / CIP 102532 / B31) (Borrelia burgdorferi), this protein is Bifunctional protein FolD.